The following is a 192-amino-acid chain: Pyridoxal 5'-phosphate synthase subunit PdxT (192 aa).

47-49 (GES) contributes to the L-glutamine binding site. The active-site Nucleophile is the Cys79. Residues Arg106 and 134–135 (IR) each bind L-glutamine. Residues His170 and Glu172 each act as charge relay system in the active site.

The protein belongs to the glutaminase PdxT/SNO family. In terms of assembly, in the presence of PdxS, forms a dodecamer of heterodimers. Only shows activity in the heterodimer.

It catalyses the reaction aldehydo-D-ribose 5-phosphate + D-glyceraldehyde 3-phosphate + L-glutamine = pyridoxal 5'-phosphate + L-glutamate + phosphate + 3 H2O + H(+). The enzyme catalyses L-glutamine + H2O = L-glutamate + NH4(+). The protein operates within cofactor biosynthesis; pyridoxal 5'-phosphate biosynthesis. Catalyzes the hydrolysis of glutamine to glutamate and ammonia as part of the biosynthesis of pyridoxal 5'-phosphate. The resulting ammonia molecule is channeled to the active site of PdxS. The protein is Pyridoxal 5'-phosphate synthase subunit PdxT of Geobacillus sp. (strain WCH70).